A 267-amino-acid polypeptide reads, in one-letter code: NAD kinase 2 (267 aa).

Aspartate 52 serves as the catalytic Proton acceptor. Residues aspartate 52–alanine 53, asparagine 124–glutamate 125, arginine 151, aspartate 153, threonine 164–serine 169, and alanine 188 contribute to the NAD(+) site.

This sequence belongs to the NAD kinase family. A divalent metal cation serves as cofactor.

The protein resides in the cytoplasm. It catalyses the reaction NAD(+) + ATP = ADP + NADP(+) + H(+). Functionally, involved in the regulation of the intracellular balance of NAD and NADP, and is a key enzyme in the biosynthesis of NADP. Catalyzes specifically the phosphorylation on 2'-hydroxyl of the adenosine moiety of NAD to yield NADP. This chain is NAD kinase 2, found in Bacillus cereus (strain ATCC 10987 / NRS 248).